The chain runs to 484 residues: Glutathione reductase (484 aa).

2 residues coordinate FAD: Ser-32 and Gly-33. Ser-32 contributes to the glutathione binding site. Position 39 (Arg-39) interacts with glutathione. 4 residues coordinate FAD: Glu-52, Thr-59, Cys-60, and Lys-68. The cysteines at positions 60 and 65 are disulfide-linked. Glutathione is bound at residue Tyr-122. Ala-138 lines the FAD pocket. The NADP(+) site is built by Ala-204, Ile-207, Glu-210, Arg-227, and Arg-233. Thr-242 is a glutathione binding site. Gly-293 contacts NADP(+). Asp-333 serves as a coordination point for FAD. Glu-339 contributes to the NADP(+) binding site. Thr-341 is an FAD binding site. Arg-349 contributes to the glutathione binding site. An NADP(+)-binding site is contributed by Val-374. Residue Lys-426 participates in glutathione binding. His-473 is a binding site for FAD. The active-site Proton acceptor is the His-473.

The protein belongs to the class-I pyridine nucleotide-disulfide oxidoreductase family. In terms of assembly, homodimer. FAD serves as cofactor.

Its subcellular location is the cytoplasm. The protein localises to the mitochondrion. The enzyme catalyses 2 glutathione + NADP(+) = glutathione disulfide + NADPH + H(+). Catalyzes the reduction of glutathione disulfide (GSSG) to reduced glutathione (GSH). Constitutes the major mechanism to maintain a high GSH:GSSG ratio in the cytosol. The protein is Glutathione reductase (GLR1) of Kluyveromyces lactis (strain ATCC 8585 / CBS 2359 / DSM 70799 / NBRC 1267 / NRRL Y-1140 / WM37) (Yeast).